Here is a 201-residue protein sequence, read N- to C-terminus: Recombination protein RecR (201 aa).

The segment at C57–C72 adopts a C4-type zinc-finger fold. One can recognise a Toprim domain in the interval T80–P175.

Belongs to the RecR family.

May play a role in DNA repair. It seems to be involved in an RecBC-independent recombinational process of DNA repair. It may act with RecF and RecO. This is Recombination protein RecR from Coxiella burnetii (strain RSA 493 / Nine Mile phase I).